The primary structure comprises 60 residues: MAVQQNKKSPSKRGMHRSHDFLVNPSTAIEPTTGETHLRHHISPNGFYRGRKVLKTKADE.

Positions 1–60 (MAVQQNKKSPSKRGMHRSHDFLVNPSTAIEPTTGETHLRHHISPNGFYRGRKVLKTKADE) are disordered. Polar residues predominate over residues 24–35 (NPSTAIEPTTGE). Residues 49 to 60 (RGRKVLKTKADE) are compositionally biased toward basic residues.

It belongs to the bacterial ribosomal protein bL32 family.

The sequence is that of Large ribosomal subunit protein bL32 from Bordetella petrii (strain ATCC BAA-461 / DSM 12804 / CCUG 43448).